Here is a 290-residue protein sequence, read N- to C-terminus: 4-diphosphocytidyl-2-C-methyl-D-erythritol kinase (290 aa).

Lys14 is an active-site residue. 103–113 lines the ATP pocket; sequence PMGGGLGGGSS. Asp145 is an active-site residue.

It belongs to the GHMP kinase family. IspE subfamily. As to quaternary structure, homodimer.

The enzyme catalyses 4-CDP-2-C-methyl-D-erythritol + ATP = 4-CDP-2-C-methyl-D-erythritol 2-phosphate + ADP + H(+). Its pathway is isoprenoid biosynthesis; isopentenyl diphosphate biosynthesis via DXP pathway; isopentenyl diphosphate from 1-deoxy-D-xylulose 5-phosphate: step 3/6. Functionally, catalyzes the phosphorylation of the position 2 hydroxy group of 4-diphosphocytidyl-2C-methyl-D-erythritol. This Pectobacterium atrosepticum (strain SCRI 1043 / ATCC BAA-672) (Erwinia carotovora subsp. atroseptica) protein is 4-diphosphocytidyl-2-C-methyl-D-erythritol kinase.